We begin with the raw amino-acid sequence, 505 residues long: Glycerol kinase (505 aa).

Thr-14 is a binding site for ADP. The ATP site is built by Thr-14, Thr-15, and Ser-16. Thr-14 contributes to the sn-glycerol 3-phosphate binding site. ADP is bound at residue Arg-18. Residues Arg-84, Glu-85, Tyr-136, and Asp-246 each contribute to the sn-glycerol 3-phosphate site. Residues Arg-84, Glu-85, Tyr-136, Asp-246, and Gln-247 each coordinate glycerol. 2 residues coordinate ADP: Thr-268 and Gly-311. Residues Thr-268, Gly-311, Gln-315, and Gly-412 each contribute to the ATP site. ADP contacts are provided by Gly-412 and Asn-416.

Belongs to the FGGY kinase family.

The catalysed reaction is glycerol + ATP = sn-glycerol 3-phosphate + ADP + H(+). It participates in polyol metabolism; glycerol degradation via glycerol kinase pathway; sn-glycerol 3-phosphate from glycerol: step 1/1. With respect to regulation, inhibited by fructose 1,6-bisphosphate (FBP). In terms of biological role, key enzyme in the regulation of glycerol uptake and metabolism. Catalyzes the phosphorylation of glycerol to yield sn-glycerol 3-phosphate. The protein is Glycerol kinase of Vibrio vulnificus (strain CMCP6).